The following is a 363-amino-acid chain: Phospho-N-acetylmuramoyl-pentapeptide-transferase (363 aa).

Transmembrane regions (helical) follow at residues 3-23, 55-75, 76-96, 116-136, 158-178, 190-210, 237-257, 261-281, 286-306, and 340-360; these read TVLI…PLYI, VVII…TGAL, PTVS…VGFL, LAGQ…FPAA, LAVF…LIIT, GLDG…VLIC, LAVV…WNAS, IFMG…LAIL, ILLV…ILQV, and FWII…AEWV.

This sequence belongs to the glycosyltransferase 4 family. MraY subfamily. Mg(2+) serves as cofactor.

Its subcellular location is the cell membrane. The enzyme catalyses UDP-N-acetyl-alpha-D-muramoyl-L-alanyl-gamma-D-glutamyl-meso-2,6-diaminopimeloyl-D-alanyl-D-alanine + di-trans,octa-cis-undecaprenyl phosphate = di-trans,octa-cis-undecaprenyl diphospho-N-acetyl-alpha-D-muramoyl-L-alanyl-D-glutamyl-meso-2,6-diaminopimeloyl-D-alanyl-D-alanine + UMP. It participates in cell wall biogenesis; peptidoglycan biosynthesis. In terms of biological role, catalyzes the initial step of the lipid cycle reactions in the biosynthesis of the cell wall peptidoglycan: transfers peptidoglycan precursor phospho-MurNAc-pentapeptide from UDP-MurNAc-pentapeptide onto the lipid carrier undecaprenyl phosphate, yielding undecaprenyl-pyrophosphoryl-MurNAc-pentapeptide, known as lipid I. In Kineococcus radiotolerans (strain ATCC BAA-149 / DSM 14245 / SRS30216), this protein is Phospho-N-acetylmuramoyl-pentapeptide-transferase.